The chain runs to 569 residues: 2-succinyl-5-enolpyruvyl-6-hydroxy-3-cyclohexene-1-carboxylate synthase (569 aa).

The protein belongs to the TPP enzyme family. MenD subfamily. Homodimer. The cofactor is Mg(2+). Mn(2+) is required as a cofactor. Requires thiamine diphosphate as cofactor.

It catalyses the reaction isochorismate + 2-oxoglutarate + H(+) = 5-enolpyruvoyl-6-hydroxy-2-succinyl-cyclohex-3-ene-1-carboxylate + CO2. Its pathway is quinol/quinone metabolism; 1,4-dihydroxy-2-naphthoate biosynthesis; 1,4-dihydroxy-2-naphthoate from chorismate: step 2/7. It participates in quinol/quinone metabolism; menaquinone biosynthesis. Functionally, catalyzes the thiamine diphosphate-dependent decarboxylation of 2-oxoglutarate and the subsequent addition of the resulting succinic semialdehyde-thiamine pyrophosphate anion to isochorismate to yield 2-succinyl-5-enolpyruvyl-6-hydroxy-3-cyclohexene-1-carboxylate (SEPHCHC). The polypeptide is 2-succinyl-5-enolpyruvyl-6-hydroxy-3-cyclohexene-1-carboxylate synthase (Paenarthrobacter aurescens (strain TC1)).